The chain runs to 101 residues: Small ribosomal subunit protein uS14 (101 aa).

This sequence belongs to the universal ribosomal protein uS14 family. Part of the 30S ribosomal subunit. Contacts proteins S3 and S10.

Its function is as follows. Binds 16S rRNA, required for the assembly of 30S particles and may also be responsible for determining the conformation of the 16S rRNA at the A site. The sequence is that of Small ribosomal subunit protein uS14 from Psychrobacter arcticus (strain DSM 17307 / VKM B-2377 / 273-4).